Consider the following 360-residue polypeptide: tRNA (guanine(9)-N1)-methyltransferase (360 aa).

Residues 1-77 (MENQDTEQSQ…RRKERIKEAE (77 aa)) form a disordered region. Basic and acidic residues-rich tracts occupy residues 8 to 24 (QSQK…DFKR) and 33 to 55 (MTKR…DEYK). Basic residues predominate over residues 56 to 67 (QKKREKKKAARE). Positions 68–77 (RRKERIKEAE) are enriched in basic and acidic residues. One can recognise an SAM-dependent MTase TRM10-type domain in the interval 94 to 293 (RAKVAPQEQI…EVLPPRKVKG (200 aa)). Residues 199–200 (LT), glycine 219, 223–227 (DKNRY), cysteine 231, leucine 245, and 257–259 (QVL) contribute to the S-adenosyl-L-methionine site. Aspartate 223 (proton acceptor) is an active-site residue. The segment at 291-360 (VKGKLTHGSD…SDEPSKGADH (70 aa)) is disordered. Basic and acidic residues predominate over residues 297 to 306 (HGSDPEKSIE). The segment covering 307–324 (PSEVSEQPVSSEQSEQPV) has biased composition (low complexity). A compositionally biased stretch (polar residues) spans 328–343 (QPVSSEQPVLSEQPVL).

Belongs to the class IV-like SAM-binding methyltransferase superfamily. TRM10 family. Monomer.

It is found in the cytoplasm. The protein resides in the nucleus. It catalyses the reaction guanosine(9) in tRNA + S-adenosyl-L-methionine = N(1)-methylguanosine(9) in tRNA + S-adenosyl-L-homocysteine + H(+). S-adenosyl-L-methionine-dependent guanine N(1)-methyltransferase that catalyzes the formation of N(1)-methylguanine at position 9 (m1G9) in cytoplasmic tRNA. This is tRNA (guanine(9)-N1)-methyltransferase from Debaryomyces hansenii (strain ATCC 36239 / CBS 767 / BCRC 21394 / JCM 1990 / NBRC 0083 / IGC 2968) (Yeast).